The primary structure comprises 237 residues: Mitochondrial inner membrane protease atp23 (237 aa).

The segment covering 1 to 18 (MSTSESSNNGSQPGNQDT) has biased composition (polar residues). A disordered region spans residues 1-24 (MSTSESSNNGSQPGNQDTGYIPGD). Position 136 (His136) interacts with a divalent metal cation. Residue Glu137 is part of the active site. A divalent metal cation is bound at residue His140.

Belongs to the peptidase M76 family.

Its subcellular location is the mitochondrion inner membrane. Has a dual role in the assembly of mitochondrial ATPase. Acts as a protease that removes N-terminal residues of mitochondrial ATPase CF(0) subunit 6 at the intermembrane space side. Also involved in the correct assembly of the membrane-embedded ATPase CF(0) particle, probably mediating association of subunit 6 with the subunit 9 ring. The chain is Mitochondrial inner membrane protease atp23 (atp23) from Aspergillus niger (strain ATCC MYA-4892 / CBS 513.88 / FGSC A1513).